Consider the following 212-residue polypeptide: Pyridoxine/pyridoxamine 5'-phosphate oxidase (212 aa).

The interval 1–20 is disordered; that stretch reads MSDSAMEPQNPLTSGDFTAA. Residues 59 to 64, 74 to 75, Lys-81, and Gln-103 each bind FMN; these read RMVLLK and YT. A substrate-binding site is contributed by Lys-64. Residues Tyr-121, Arg-125, and Ser-129 each contribute to the substrate site. FMN-binding positions include 138 to 139 and Trp-183; that span reads QS. 189-191 lines the substrate pocket; sequence RLH. Arg-193 is an FMN binding site.

This sequence belongs to the pyridoxamine 5'-phosphate oxidase family. As to quaternary structure, homodimer. Requires FMN as cofactor.

It carries out the reaction pyridoxamine 5'-phosphate + O2 + H2O = pyridoxal 5'-phosphate + H2O2 + NH4(+). The catalysed reaction is pyridoxine 5'-phosphate + O2 = pyridoxal 5'-phosphate + H2O2. Its pathway is cofactor metabolism; pyridoxal 5'-phosphate salvage; pyridoxal 5'-phosphate from pyridoxamine 5'-phosphate: step 1/1. It participates in cofactor metabolism; pyridoxal 5'-phosphate salvage; pyridoxal 5'-phosphate from pyridoxine 5'-phosphate: step 1/1. Functionally, catalyzes the oxidation of either pyridoxine 5'-phosphate (PNP) or pyridoxamine 5'-phosphate (PMP) into pyridoxal 5'-phosphate (PLP). The sequence is that of Pyridoxine/pyridoxamine 5'-phosphate oxidase from Azorhizobium caulinodans (strain ATCC 43989 / DSM 5975 / JCM 20966 / LMG 6465 / NBRC 14845 / NCIMB 13405 / ORS 571).